The primary structure comprises 79 residues: Sec-independent protein translocase protein TatA (79 aa).

The chain crosses the membrane as a helical span at residues Met1–Gly21. The segment at Val43–Gly79 is disordered. The span at Thr69–Gly79 shows a compositional bias: basic and acidic residues.

The protein belongs to the TatA/E family. As to quaternary structure, the Tat system comprises two distinct complexes: a TatABC complex, containing multiple copies of TatA, TatB and TatC subunits, and a separate TatA complex, containing only TatA subunits. Substrates initially bind to the TatABC complex, which probably triggers association of the separate TatA complex to form the active translocon.

The protein localises to the cell inner membrane. Functionally, part of the twin-arginine translocation (Tat) system that transports large folded proteins containing a characteristic twin-arginine motif in their signal peptide across membranes. TatA could form the protein-conducting channel of the Tat system. This chain is Sec-independent protein translocase protein TatA, found in Delftia acidovorans (strain DSM 14801 / SPH-1).